We begin with the raw amino-acid sequence, 301 residues long: GTPase Era (301 aa).

The region spanning 4–173 (KAGFVALIGK…LECISKYLSP (170 aa)) is the Era-type G domain. The tract at residues 12 to 19 (GKPNAGKS) is G1. A GTP-binding site is contributed by 12-19 (GKPNAGKS). The G2 stretch occupies residues 38–42 (NATRK). Residues 64–67 (DTPG) form a G3 region. Residues 64-68 (DTPGL) and 122-125 (SKID) contribute to the GTP site. Residues 122-125 (SKID) are G4. Positions 152-154 (LSA) are G5. The region spanning 204–280 (LSDEIPYESD…FLNLQVIAQK (77 aa)) is the KH type-2 domain.

It belongs to the TRAFAC class TrmE-Era-EngA-EngB-Septin-like GTPase superfamily. Era GTPase family. As to quaternary structure, monomer.

It is found in the cytoplasm. Its subcellular location is the cell inner membrane. In terms of biological role, an essential GTPase that binds both GDP and GTP, with rapid nucleotide exchange. Plays a role in 16S rRNA processing and 30S ribosomal subunit biogenesis and possibly also in cell cycle regulation and energy metabolism. The chain is GTPase Era from Helicobacter pylori (strain G27).